A 346-amino-acid polypeptide reads, in one-letter code: Nuclear distribution protein nudE-like 1 (346 aa).

Residues Lys13–Gly190 adopt a coiled-coil conformation. 2 disordered regions span residues Arg184–Lys205 and Tyr325–Val346. The span at Thr188 to Thr200 shows a compositional bias: polar residues. A compositionally biased stretch (pro residues) spans Pro335–Val346.

The protein belongs to the nudE family. Phosphorylated in mitosis.

It is found in the cytoplasm. The protein localises to the cytoskeleton. The protein resides in the microtubule organizing center. It localises to the centrosome. Its subcellular location is the spindle. Required for organization of the cellular microtubule array and microtubule anchoring at the centrosome. Positively regulates the activity of the minus-end directed microtubule motor protein dynein. May enhance dynein-mediated microtubule sliding by targeting dynein to the microtubule plus end. Positively regulates lysosome peripheral distribution and ruffled border formation in osteoclasts. The protein is Nuclear distribution protein nudE-like 1 (ndel1) of Xenopus tropicalis (Western clawed frog).